A 1475-amino-acid chain; its full sequence is Nuclear pore complex protein Nup153 (1475 aa).

Residues 1 to 15 are compositionally biased toward gly residues; the sequence is MASGAGGVGGGGGGK. Disordered stretches follow at residues 1-37, 90-124, and 171-225; these read MASG…QQHQ, DEES…NYPD, and DSTS…TATS. Position 2 is an N-acetylalanine (Ala2). Position 102 is a phosphothreonine (Thr102). Composition is skewed to polar residues over residues 107–121 and 181–190; these read VSNT…TASN and ISTTSGFSSR. Ser182, Ser185, Ser192, Ser203, and Ser209 each carry phosphoserine. Residues 236–237 form repeat 1; that stretch reads FG. A 29 X 2 AA repeats of F-G region spans residues 236–1418; sequence FGTLSPSLGN…NSPSGVFTFG (1183 aa). A phosphoserine mark is found at Ser240, Ser257, Ser297, Ser320, Ser330, Ser333, Ser334, Ser338, and Ser343. Lys353 is covalently cross-linked (Glycyl lysine isopeptide (Lys-Gly) (interchain with G-Cter in SUMO2)). A Phosphothreonine modification is found at Thr369. Position 384 is an N6-acetyllysine (Lys384). At Thr388 the chain carries Phosphothreonine. Residues Ser500, Ser516, Ser518, Ser522, and Ser529 each carry the phosphoserine modification. 2 O-linked (GlcNAc) serine glycosylation sites follow: Ser534 and Ser544. Residue Thr588 is modified to Phosphothreonine. Residues Ser607, Ser614, Ser619, and Ser633 each carry the phosphoserine modification. Repeat unit 2 spans residues 652–653; that stretch reads FG. Residues 657–687 form a RanBP2-type 1 zinc finger; it reads KAGSSWQCDTCLLQNKVTDNKCIACQAAKLS. 4 residues coordinate Zn(2+): Cys664, Cys667, Cys678, and Cys681. Ser687 is subject to Phosphoserine. Repeat unit 3 spans residues 715 to 716; it reads FG. Residue Lys718 is modified to N6-acetyllysine. A RanBP2-type 2 zinc finger spans residues 722–751; the sequence is VIGTWDCDTCLVQNKPEAIKCVACETPKPG. Zn(2+) is bound by residues Cys728, Cys731, Cys742, and Cys745. Repeat 4 spans residues 786–787; that stretch reads FG. 2 RanBP2-type zinc fingers span residues 793-822 and 851-880; these read PIGS…EKPG and PEGS…AKPG. Zn(2+) contacts are provided by Cys799, Cys802, Cys813, Cys816, Cys857, Cys860, Cys871, and Cys874. Ser891 bears the Phosphoserine mark. Repeat 5 spans residues 905–906; it reads FG. Ser908 and Ser909 each carry an O-linked (GlcNAc) serine glycan. Copy 6 of the repeat occupies 926-927; the sequence is FG. Lys954 is subject to N6-acetyllysine. A run of 5 repeats spans residues 961 to 962, 983 to 984, 1000 to 1001, 1024 to 1025, and 1084 to 1085. The O-linked (GlcNAc) serine glycan is linked to Ser1113. Tandem repeats lie at residues 1118-1119 and 1135-1136. The segment at 1128 to 1167 is disordered; the sequence is KCQPVFSFGNSEQTKDENSSKSTFSFSMTKPSEKESEQPA. Residues 1147–1157 show a composition bias toward low complexity; sequence SKSTFSFSMTK. Thr1156 is a glycosylation site (O-linked (GlcNAc) threonine). Tandem repeats lie at residues 1173 to 1174, 1212 to 1213, 1228 to 1229, 1240 to 1241, 1275 to 1276, 1289 to 1290, 1291 to 1292, 1306 to 1307, 1319 to 1320, 1327 to 1328, and 1341 to 1342. The interval 1311–1402 is disordered; the sequence is SAPSASPAFG…SAFQFGSSTT (92 aa). The segment covering 1321–1335 has biased composition (polar residues); that stretch reads ANQTPTFGQSQGASQ. Composition is skewed to polar residues over residues 1343-1356 and 1363-1396; these read SISS…TGSQ and GTVS…SAFQ. Residues 1350–1475 are (Microbial infection) Interacts with HIV-1 capsid protein p24 (CA); that stretch reads LFPTGSQPAP…KIKTAVRRRK (126 aa). Tandem repeats lie at residues 1362-1363, 1374-1375, 1383-1384, 1397-1398, and 1417-1418. Composition is skewed to polar residues over residues 1420–1431 and 1438–1463; these read NSSTPAASAQPS and FNQS…TSFS. Residues 1420-1475 form a disordered region; it reads NSSTPAASAQPSGSGGFPFNQSPAAFTVGSNGKNVFSSSGTSFSGRKIKTAVRRRK. Ser1457, Ser1461, and Ser1463 each carry phosphoserine. Residues 1465-1475 show a composition bias toward basic residues; the sequence is RKIKTAVRRRK.

It belongs to the NUP153 family. In terms of assembly, part of the nuclear pore complex (NPC). Interacts with TPR (via coiled coil region); the interaction is direct and provides a link between the core structure and the TPR-containing nuclear basket of the nuclear pore complex (NPC). Interacts with HIKESHI. Interacts with SENP2. Interacts with XPO5. Interacts with RAN; the interaction occurs in a GTP- and GDP-independent manner. Interacts with MCM3AP isoform GANP; this interaction is required for GANP localization at the nuclear pore complex. Interacts with MAPK1. (Microbial infection) Interacts (via C-terminus) with HIV-1 capsid protein p24 (CA) (via N-terminus). As to quaternary structure, (Microbial infection) Interacts with HIV-1 integrase; this interaction might play a role in nuclear import of HIV pre-integration complex. In terms of assembly, (Microbial infection) Interacts with hepatitis B virus capsid protein; this interaction probably plays a role in nuclear import of HBV genome. (Microbial infection) Interacts with Epstein-barr virus BGLF4; this interaction allows BGLF4 nuclear entry. As to quaternary structure, (Microbial infection) Interacts with HIV-2 virus protein vpx; this interaction might promote vpx nuclear entry. The cofactor is Zn(2+). In terms of processing, phosphorylated in interphase, hyperphosphorylated during mitosis. May play a role in the reversible disassembly of the nuclear pore complex during mitosis. Post-translationally, proteolytically degraded after poliovirus (PV) infection; degradation is partial and NCP- and TPR-binding domains withstand degradation. O-glycosylated during cytokinesis at sites identical or close to phosphorylation sites, this interferes with the phosphorylation status.

The protein localises to the nucleus. It is found in the nucleus membrane. The protein resides in the nuclear pore complex. In terms of biological role, component of the nuclear pore complex (NPC), a complex required for the trafficking across the nuclear envelope. Functions as a scaffolding element in the nuclear phase of the NPC essential for normal nucleocytoplasmic transport of proteins and mRNAs. Involved in the quality control and retention of unspliced mRNAs in the nucleus; in association with TPR, regulates the nuclear export of unspliced mRNA species bearing constitutive transport element (CTE) in a NXF1- and KHDRBS1-independent manner. Mediates TPR anchoring to the nuclear membrane at NPC. The repeat-containing domain may be involved in anchoring other components of the NPC to the pore membrane. Possible DNA-binding subunit of the nuclear pore complex (NPC). Its function is as follows. (Microbial infection) Interacts with HIV-1 caspid protein P24 and thereby promotes the integration of the virus in the nucleus of non-dividing cells (in vitro). (Microbial infection) Binds HIV-2 protein vpx and thereby promotes the nuclear translocation of the lentiviral genome (in vitro). The sequence is that of Nuclear pore complex protein Nup153 (NUP153) from Homo sapiens (Human).